We begin with the raw amino-acid sequence, 339 residues long: D-erythrose-4-phosphate dehydrogenase (339 aa).

Residues 12-13 (RI) and Arg81 contribute to the NAD(+) site. Substrate contacts are provided by residues 154–156 (SCT), Arg200, 213–214 (TR), and Arg236. The active-site Nucleophile is the Cys155. An NAD(+)-binding site is contributed by Asn318.

The protein belongs to the glyceraldehyde-3-phosphate dehydrogenase family. Epd subfamily. Homotetramer.

The protein localises to the cytoplasm. The enzyme catalyses D-erythrose 4-phosphate + NAD(+) + H2O = 4-phospho-D-erythronate + NADH + 2 H(+). It functions in the pathway cofactor biosynthesis; pyridoxine 5'-phosphate biosynthesis; pyridoxine 5'-phosphate from D-erythrose 4-phosphate: step 1/5. Its function is as follows. Catalyzes the NAD-dependent conversion of D-erythrose 4-phosphate to 4-phosphoerythronate. The protein is D-erythrose-4-phosphate dehydrogenase of Cronobacter sakazakii (strain ATCC BAA-894) (Enterobacter sakazakii).